The chain runs to 369 residues: D-alanine--D-alanine ligase (369 aa).

Residues 152 to 359 form the ATP-grasp domain; sequence KKLFAAEGLP…YPSLLATMVE (208 aa). ATP is bound at residue 180-235; sequence RERLGLPVFVKPARGGSSIGVSRVSSWDELDAAVAAARDHDPKVIVEAAIAGRELE. The Mg(2+) site is built by Asp-314, Glu-326, and Asn-328.

Belongs to the D-alanine--D-alanine ligase family. Mg(2+) serves as cofactor. It depends on Mn(2+) as a cofactor.

The protein resides in the cytoplasm. It carries out the reaction 2 D-alanine + ATP = D-alanyl-D-alanine + ADP + phosphate + H(+). It participates in cell wall biogenesis; peptidoglycan biosynthesis. Functionally, cell wall formation. In Mycolicibacterium paratuberculosis (strain ATCC BAA-968 / K-10) (Mycobacterium paratuberculosis), this protein is D-alanine--D-alanine ligase.